Reading from the N-terminus, the 471-residue chain is Mitochondrial distribution and morphology protein 10 (471 aa).

A disordered region spans residues 429 to 455; the sequence is PSSFSSPSRAANSTPAGGGQSVGGGIS. Positions 444-455 are enriched in gly residues; that stretch reads AGGGQSVGGGIS.

This sequence belongs to the MDM10 family. As to quaternary structure, component of the ER-mitochondria encounter structure (ERMES) or MDM complex, composed of mmm1, mdm10, mdm12 and mdm34. Associates with the mitochondrial outer membrane sorting assembly machinery SAM(core) complex.

Its subcellular location is the mitochondrion outer membrane. Component of the ERMES/MDM complex, which serves as a molecular tether to connect the endoplasmic reticulum and mitochondria. Components of this complex are involved in the control of mitochondrial shape and protein biogenesis and may function in phospholipid exchange. mdm10 is involved in the late assembly steps of the general translocase of the mitochondrial outer membrane (TOM complex). Functions in the tom40-specific route of the assembly of outer membrane beta-barrel proteins, including the association of tom40 with the receptor tom22 and small TOM proteins. Can associate with the SAM(core) complex as well as the mdm12-mmm1 complex, both involved in late steps of the major beta-barrel assembly pathway, that is responsible for biogenesis of all outer membrane beta-barrel proteins. May act as a switch that shuttles between both complexes and channels precursor proteins into the tom40-specific pathway. Plays a role in mitochondrial morphology and in the inheritance of mitochondria. This chain is Mitochondrial distribution and morphology protein 10 (mdmB), found in Aspergillus fumigatus (strain ATCC MYA-4609 / CBS 101355 / FGSC A1100 / Af293) (Neosartorya fumigata).